We begin with the raw amino-acid sequence, 305 residues long: Serine/threonine-protein phosphatase 6 catalytic subunit (305 aa).

Residues Asp54, His56, Asp82, and Asn114 each contribute to the Mn(2+) site. The Proton donor role is filled by His115. Residues His164 and His238 each coordinate Mn(2+).

Belongs to the PPP phosphatase family. PP-6 (PP-V) subfamily. Mn(2+) serves as cofactor.

The enzyme catalyses O-phospho-L-seryl-[protein] + H2O = L-seryl-[protein] + phosphate. The catalysed reaction is O-phospho-L-threonyl-[protein] + H2O = L-threonyl-[protein] + phosphate. This chain is Serine/threonine-protein phosphatase 6 catalytic subunit (ppp6c), found in Dictyostelium discoideum (Social amoeba).